The sequence spans 443 residues: Toxin YjjJ (443 aa).

Residue Asp342 is the Proton acceptor of the active site.

The protein belongs to the HipA Ser/Thr kinase family.

Its function is as follows. Toxic when overexpressed in E.coli, leading to long filamentous cells. The toxic effect is neutralized by non-cognate antitoxin HipB. Does not seem to inhibit DNA, RNA or protein synthesis, and unlike paralogous toxin HipA its toxic activity is not counteracted by overexpression of GltX. Binds DNA. Might be a protein kinase. The chain is Toxin YjjJ (yjjJ) from Escherichia coli (strain K12).